The chain runs to 339 residues: F420-dependent glucose-6-phosphate dehydrogenase (339 aa).

Aspartate 41 is a coenzyme F420-(gamma-Glu)n binding site. Histidine 42 functions as the Proton donor in the catalytic mechanism. Coenzyme F420-(gamma-Glu)n contacts are provided by residues threonine 78 and 109–110 (TG). The Proton acceptor role is filled by glutamate 111. Residues asparagine 114, 177 to 178 (SG), and 180 to 181 (AA) each bind coenzyme F420-(gamma-Glu)n. The substrate site is built by threonine 195, lysine 198, lysine 259, and arginine 283.

The protein belongs to the F420-dependent glucose-6-phosphate dehydrogenase family. As to quaternary structure, homodimer.

It catalyses the reaction oxidized coenzyme F420-(gamma-L-Glu)(n) + D-glucose 6-phosphate + H(+) = 6-phospho-D-glucono-1,5-lactone + reduced coenzyme F420-(gamma-L-Glu)(n). Its function is as follows. Catalyzes the coenzyme F420-dependent oxidation of glucose 6-phosphate (G6P) to 6-phosphogluconolactone. This chain is F420-dependent glucose-6-phosphate dehydrogenase, found in Nakamurella multipartita (strain ATCC 700099 / DSM 44233 / CIP 104796 / JCM 9543 / NBRC 105858 / Y-104) (Microsphaera multipartita).